We begin with the raw amino-acid sequence, 240 residues long: Uridylate kinase (240 aa).

An ATP-binding site is contributed by Lys13–Gly16. The tract at residues Gly21–Gly26 is involved in allosteric activation by GTP. Gly55 provides a ligand contact to UMP. ATP contacts are provided by Gly56 and Arg60. Residues Asp75 and Ile136–Thr143 contribute to the UMP site. Residues Asn164, Tyr170, and Asp173 each coordinate ATP.

Belongs to the UMP kinase family. In terms of assembly, homohexamer.

It localises to the cytoplasm. It catalyses the reaction UMP + ATP = UDP + ADP. It participates in pyrimidine metabolism; CTP biosynthesis via de novo pathway; UDP from UMP (UMPK route): step 1/1. Allosterically activated by GTP. Inhibited by UTP. In terms of biological role, catalyzes the reversible phosphorylation of UMP to UDP. The sequence is that of Uridylate kinase from Staphylococcus aureus (strain USA300).